Reading from the N-terminus, the 384-residue chain is S-adenosylmethionine synthase (384 aa).

An ATP-binding site is contributed by histidine 15. Residue aspartate 17 participates in Mg(2+) binding. A K(+)-binding site is contributed by glutamate 43. L-methionine is bound by residues glutamate 56 and glutamine 99. The segment at 99–109 (QSPDINQGVDK) is flexible loop. ATP-binding positions include 164–166 (DAK), 230–231 (RF), aspartate 239, 245–246 (RK), alanine 262, and lysine 266. Aspartate 239 serves as a coordination point for L-methionine. Residue lysine 270 participates in L-methionine binding.

This sequence belongs to the AdoMet synthase family. In terms of assembly, homotetramer; dimer of dimers. Mg(2+) serves as cofactor. It depends on K(+) as a cofactor.

It localises to the cytoplasm. The catalysed reaction is L-methionine + ATP + H2O = S-adenosyl-L-methionine + phosphate + diphosphate. It participates in amino-acid biosynthesis; S-adenosyl-L-methionine biosynthesis; S-adenosyl-L-methionine from L-methionine: step 1/1. Its function is as follows. Catalyzes the formation of S-adenosylmethionine (AdoMet) from methionine and ATP. The overall synthetic reaction is composed of two sequential steps, AdoMet formation and the subsequent tripolyphosphate hydrolysis which occurs prior to release of AdoMet from the enzyme. This chain is S-adenosylmethionine synthase, found in Aliivibrio salmonicida (strain LFI1238) (Vibrio salmonicida (strain LFI1238)).